The chain runs to 373 residues: Chorismate synthase (373 aa).

NADP(+) is bound at residue R46. FMN contacts are provided by residues 123–125 (RSS), 251–252 (NA), G295, 310–314 (KPTPS), and R337.

The protein belongs to the chorismate synthase family. FMNH2 serves as cofactor.

It catalyses the reaction 5-O-(1-carboxyvinyl)-3-phosphoshikimate = chorismate + phosphate. Its pathway is metabolic intermediate biosynthesis; chorismate biosynthesis; chorismate from D-erythrose 4-phosphate and phosphoenolpyruvate: step 7/7. In terms of biological role, catalyzes the anti-1,4-elimination of the C-3 phosphate and the C-6 proR hydrogen from 5-enolpyruvylshikimate-3-phosphate (EPSP) to yield chorismate, which is the branch point compound that serves as the starting substrate for the three terminal pathways of aromatic amino acid biosynthesis. This reaction introduces a second double bond into the aromatic ring system. The polypeptide is Chorismate synthase (Methanococcus maripaludis (strain C5 / ATCC BAA-1333)).